Here is a 197-residue protein sequence, read N- to C-terminus: MRTATIKRKTKETDIEVAVNLDGSGVSSVATGIGFFDHMLDLLARHSRIDIMVKADGDLHVDYHHTTEDVGIALGQAVKQALGTMAGITRYACAHMPMDETLSRVVIDISGRPMLVFKVEFPRDKIGEFDTELVREWFNAFAVNAGVTLHVETLYGENSHHIAESCFKGLARALRAAVAIDPRAAGEVPSTKGQLGG.

Belongs to the imidazoleglycerol-phosphate dehydratase family.

It is found in the cytoplasm. The enzyme catalyses D-erythro-1-(imidazol-4-yl)glycerol 3-phosphate = 3-(imidazol-4-yl)-2-oxopropyl phosphate + H2O. Its pathway is amino-acid biosynthesis; L-histidine biosynthesis; L-histidine from 5-phospho-alpha-D-ribose 1-diphosphate: step 6/9. This is Imidazoleglycerol-phosphate dehydratase from Nitrobacter hamburgensis (strain DSM 10229 / NCIMB 13809 / X14).